A 108-amino-acid polypeptide reads, in one-letter code: uncharacterized protein (108 aa).

It belongs to the UPF0440 family.

This is an uncharacterized protein from Thermococcus kodakarensis (strain ATCC BAA-918 / JCM 12380 / KOD1) (Pyrococcus kodakaraensis (strain KOD1)).